Here is a 475-residue protein sequence, read N- to C-terminus: MEIOTIC F-BOX protein MOF (475 aa).

Residues 1–58 (MRRERDATQIPENPMEGIPQTAAAAAAAAAAEASEPPRKRARVDGGGGGAGEEEEDRL) form a disordered region. Positions 22 to 33 (AAAAAAAAAAEA) are enriched in low complexity. The 37-residue stretch at 55–91 (EDRLSDLPDCLLEDILAHLGSRQAVQTSVLSRRWRNL) folds into the F-box domain.

Belongs to the F-box protein family. FBX subfamily. Part of a SCF (SKP1-CUL1-F-box protein) E3 ubiquitin-protein ligase complex. Interacts (via F-box domain) directly with SKP1. In terms of tissue distribution, highly expressed in the stem, leaf and in the anther during meiosis. Weakly expressed in roots and lemma/palea.

The protein localises to the nucleus. It is found in the chromosome. It functions in the pathway protein modification; protein ubiquitination. Probable component of a SCF (SKP1-CULLIN-F-box protein) E3 ubiquitin-protein ligase complex and may function through the ubiquitin-mediated protein degradation or signaling pathway. Required for male meiotic prophase I progression. Required for telomere bouquet formation, homologous chromosome pairing and for the formation of the synaptonemal complex (SC), which stabilizes initial chromosomal axial associations and promotes crossover formation. Involved in meiotic DNA double-strand break (DSB) end-processing and repair, and is important in the recruitment of DSB repair proteins to the DSB sites. In Oryza sativa subsp. japonica (Rice), this protein is MEIOTIC F-BOX protein MOF.